Reading from the N-terminus, the 394-residue chain is Elongation factor Tu (394 aa).

The region spanning 10-205 (KPHMNVGTIG…SMDNYFDLPE (196 aa)) is the tr-type G domain. A G1 region spans residues 19-26 (GHVDHGKT). 19–26 (GHVDHGKT) provides a ligand contact to GTP. A Mg(2+)-binding site is contributed by T26. A G2 region spans residues 61–65 (GITIN). The interval 82-85 (DCPG) is G3. GTP-binding positions include 82-86 (DCPGH) and 137-140 (NKLD). The interval 137-140 (NKLD) is G4. Residues 173–175 (SAF) form a G5 region.

This sequence belongs to the TRAFAC class translation factor GTPase superfamily. Classic translation factor GTPase family. EF-Tu/EF-1A subfamily. In terms of assembly, monomer.

Its subcellular location is the cytoplasm. It catalyses the reaction GTP + H2O = GDP + phosphate + H(+). Its function is as follows. GTP hydrolase that promotes the GTP-dependent binding of aminoacyl-tRNA to the A-site of ribosomes during protein biosynthesis. The chain is Elongation factor Tu from Borreliella afzelii (strain PKo) (Borrelia afzelii).